A 508-amino-acid chain; its full sequence is 2,3-bisphosphoglycerate-independent phosphoglycerate mutase (508 aa).

Mn(2+)-binding residues include aspartate 13 and serine 63. Serine 63 (phosphoserine intermediate) is an active-site residue. Substrate is bound by residues histidine 122, 152–153 (RD), arginine 184, arginine 190, 256–259 (RADR), and lysine 330. The Mn(2+) site is built by aspartate 397, histidine 401, aspartate 438, histidine 439, and histidine 457.

It belongs to the BPG-independent phosphoglycerate mutase family. As to quaternary structure, monomer. Mn(2+) is required as a cofactor.

The enzyme catalyses (2R)-2-phosphoglycerate = (2R)-3-phosphoglycerate. Its pathway is carbohydrate degradation; glycolysis; pyruvate from D-glyceraldehyde 3-phosphate: step 3/5. Catalyzes the interconversion of 2-phosphoglycerate and 3-phosphoglycerate. This chain is 2,3-bisphosphoglycerate-independent phosphoglycerate mutase, found in Laribacter hongkongensis (strain HLHK9).